The chain runs to 685 residues: DNA ligase (685 aa).

NAD(+) contacts are provided by residues 47-51 (DSEYD), 96-97 (SL), and E125. K127 serves as the catalytic N6-AMP-lysine intermediate. R148, E185, K304, and K328 together coordinate NAD(+). Zn(2+) is bound by residues C422, C425, C440, and C446. One can recognise a BRCT domain in the interval 605–685 (ADAQPLKGQT…ALLALFAANR (81 aa)).

This sequence belongs to the NAD-dependent DNA ligase family. LigA subfamily. Mg(2+) is required as a cofactor. Mn(2+) serves as cofactor.

It catalyses the reaction NAD(+) + (deoxyribonucleotide)n-3'-hydroxyl + 5'-phospho-(deoxyribonucleotide)m = (deoxyribonucleotide)n+m + AMP + beta-nicotinamide D-nucleotide.. Functionally, DNA ligase that catalyzes the formation of phosphodiester linkages between 5'-phosphoryl and 3'-hydroxyl groups in double-stranded DNA using NAD as a coenzyme and as the energy source for the reaction. It is essential for DNA replication and repair of damaged DNA. The polypeptide is DNA ligase (Shewanella sp. (strain W3-18-1)).